Consider the following 809-residue polypeptide: LPS-assembly protein LptD (809 aa).

The N-terminal stretch at M1–A22 is a signal peptide.

This sequence belongs to the LptD family. Component of the lipopolysaccharide transport and assembly complex. Interacts with LptE and LptA.

Its subcellular location is the cell outer membrane. In terms of biological role, together with LptE, is involved in the assembly of lipopolysaccharide (LPS) at the surface of the outer membrane. The sequence is that of LPS-assembly protein LptD from Xanthomonas euvesicatoria pv. vesicatoria (strain 85-10) (Xanthomonas campestris pv. vesicatoria).